The sequence spans 232 residues: Phosphatidylserine decarboxylase proenzyme (232 aa).

S190 acts as the Schiff-base intermediate with substrate; via pyruvic acid in catalysis. S190 is modified (pyruvic acid (Ser); by autocatalysis).

This sequence belongs to the phosphatidylserine decarboxylase family. PSD-A subfamily. Heterodimer of a large membrane-associated beta subunit and a small pyruvoyl-containing alpha subunit. The cofactor is pyruvate. In terms of processing, is synthesized initially as an inactive proenzyme. Formation of the active enzyme involves a self-maturation process in which the active site pyruvoyl group is generated from an internal serine residue via an autocatalytic post-translational modification. Two non-identical subunits are generated from the proenzyme in this reaction, and the pyruvate is formed at the N-terminus of the alpha chain, which is derived from the carboxyl end of the proenzyme. The post-translation cleavage follows an unusual pathway, termed non-hydrolytic serinolysis, in which the side chain hydroxyl group of the serine supplies its oxygen atom to form the C-terminus of the beta chain, while the remainder of the serine residue undergoes an oxidative deamination to produce ammonia and the pyruvoyl prosthetic group on the alpha chain.

It localises to the cell membrane. The enzyme catalyses a 1,2-diacyl-sn-glycero-3-phospho-L-serine + H(+) = a 1,2-diacyl-sn-glycero-3-phosphoethanolamine + CO2. It participates in phospholipid metabolism; phosphatidylethanolamine biosynthesis; phosphatidylethanolamine from CDP-diacylglycerol: step 2/2. Its function is as follows. Catalyzes the formation of phosphatidylethanolamine (PtdEtn) from phosphatidylserine (PtdSer). In Cereibacter sphaeroides (strain KD131 / KCTC 12085) (Rhodobacter sphaeroides), this protein is Phosphatidylserine decarboxylase proenzyme.